We begin with the raw amino-acid sequence, 160 residues long: MDKLKKVLSGQDTEDRSGLSEVVEASSLSWSTRIKGFIACFAIGILCSLLGTVLLWVPRKGLHLFAVFYTFGNIASIGSTIFLMGPVKQLKRMFEPTRLIATIMVLLCFALTLCSAFWWHNKGLALIFCILQSLALTWYSLSFIPFARDAVKKCFAVCLA.

The residue at position 1 (methionine 1) is an N-acetylmethionine. Over 1-36 (MDKLKKVLSGQDTEDRSGLSEVVEASSLSWSTRIKG) the chain is Cytoplasmic. Serine 9 bears the Phosphoserine mark. Residues 37–57 (FIACFAIGILCSLLGTVLLWV) form a helical membrane-spanning segment. At 58-63 (PRKGLH) the chain is on the lumenal side. The chain crosses the membrane as a helical span at residues 64–84 (LFAVFYTFGNIASIGSTIFLM). Residues 85–98 (GPVKQLKRMFEPTR) are Cytoplasmic-facing. The chain crosses the membrane as a helical span at residues 99-119 (LIATIMVLLCFALTLCSAFWW). The Lumenal portion of the chain corresponds to 120 to 123 (HNKG). A helical membrane pass occupies residues 124-144 (LALIFCILQSLALTWYSLSFI). Over 145 to 160 (PFARDAVKKCFAVCLA) the chain is Cytoplasmic.

This sequence belongs to the SFT2 family.

The protein resides in the membrane. May be involved in fusion of retrograde transport vesicles derived from an endocytic compartment with the Golgi complex. In Homo sapiens (Human), this protein is Vesicle transport protein SFT2B.